The primary structure comprises 94 residues: Co-chaperonin GroES (94 aa).

It belongs to the GroES chaperonin family. Heptamer of 7 subunits arranged in a ring. Interacts with the chaperonin GroEL.

Its subcellular location is the cytoplasm. Functionally, together with the chaperonin GroEL, plays an essential role in assisting protein folding. The GroEL-GroES system forms a nano-cage that allows encapsulation of the non-native substrate proteins and provides a physical environment optimized to promote and accelerate protein folding. GroES binds to the apical surface of the GroEL ring, thereby capping the opening of the GroEL channel. This is Co-chaperonin GroES from Bacillus subtilis (strain 168).